A 126-amino-acid polypeptide reads, in one-letter code: Glycine cleavage system H protein (126 aa).

One can recognise a Lipoyl-binding domain in the interval 22–104; it reads VATIGITEYA…YEKAWMVKVE (83 aa). K63 carries the N6-lipoyllysine modification.

Belongs to the GcvH family. The glycine cleavage system is composed of four proteins: P, T, L and H. It depends on (R)-lipoate as a cofactor.

Functionally, the glycine cleavage system catalyzes the degradation of glycine. The H protein shuttles the methylamine group of glycine from the P protein to the T protein. Is also involved in protein lipoylation via its role as an octanoyl/lipoyl carrier protein intermediate. The protein is Glycine cleavage system H protein of Staphylococcus aureus (strain MSSA476).